Consider the following 168-residue polypeptide: Desumoylating isopeptidase 1 (168 aa).

Residues 7–149 form the PPPDE domain; that stretch reads YPVKLYVYDL…FGQALRPFLD (143 aa). Histidine 38 is an active-site residue. Residues 83-91 carry the Nuclear export signal 1 motif; that stretch reads IFLEYLSSL. Cysteine 108 is a catalytic residue. Positions 139–153 match the Nuclear export signal 2 motif; that stretch reads PFGQALRPFLDSIQI.

Belongs to the DeSI family. In terms of assembly, homodimer. Interacts with UBQLN4; leading to the export of UBQLN4 from the nucleus.

It localises to the cytoplasm. The protein resides in the nucleus. It carries out the reaction S-hexadecanoyl-L-cysteinyl-[protein] + H2O = L-cysteinyl-[protein] + hexadecanoate + H(+). Functionally, protease which deconjugates SUMO1, SUMO2 and SUMO3 from some substrate proteins. Has isopeptidase but not SUMO-processing activity. Desumoylates ZBTB46. Collaborates with UBQLN4 in the export of ubiquitinated proteins from the nucleus to the cytoplasm. Exhibits palmitoyl protein thioesterase (S-depalmitoylation) activity towards synthetic substrates 4-methylumbelliferyl-6-S-palmitoyl-beta-D-glucopyranoside and S-depalmitoylation probe 5 (DPP-5). This is Desumoylating isopeptidase 1 (Desi1) from Rattus norvegicus (Rat).